The sequence spans 72 residues: Translation initiation factor IF-1 (72 aa).

An S1-like domain is found at 1–72 (MSKDDVIEMQ…TRGRITWRAK (72 aa)).

It belongs to the IF-1 family. In terms of assembly, component of the 30S ribosomal translation pre-initiation complex which assembles on the 30S ribosome in the order IF-2 and IF-3, IF-1 and N-formylmethionyl-tRNA(fMet); mRNA recruitment can occur at any time during PIC assembly.

The protein resides in the cytoplasm. One of the essential components for the initiation of protein synthesis. Stabilizes the binding of IF-2 and IF-3 on the 30S subunit to which N-formylmethionyl-tRNA(fMet) subsequently binds. Helps modulate mRNA selection, yielding the 30S pre-initiation complex (PIC). Upon addition of the 50S ribosomal subunit IF-1, IF-2 and IF-3 are released leaving the mature 70S translation initiation complex. This is Translation initiation factor IF-1 from Clostridium kluyveri (strain ATCC 8527 / DSM 555 / NBRC 12016 / NCIMB 10680 / K1).